A 508-amino-acid chain; its full sequence is MEEIQRYLHLERSEQQDFLYPLIFQEYIYTFAHDRGFSRSIWSENRGYENKSSLLIVKRLINRMDQENHFLISPNDSNQNPFWACNKNFYSQILSEGFAFSVEIPFSRRLISCLEKKIVKFQNLRSIHSTFPFLEDNFSHLNFVLDILIPHPVHVEILVQTLRYWVKDASSLHFLRFFLNEYCNWNSVITPTKASSSFSKRNQRLFLFLYNSHVCEYESIFVFLRNQSSYLRSTSSGVLLERIYFYGKIKRLVNVFVKLKDFQANLWLVKEPYLHSIRYQRKSILASKGTSLFMNKWKCYLVTFWQSHFSLWFHPRRISINQLSNYSLDFLGYHSSVRMNPSVVRSQILENAFRINNAIKKFDTLVPIIPLVASLAKAKFCNVLGHPISKPVWADLSDSNILDRFGRICRNLSHYHSGSSKKKSLYRIKYILRLSCARTLARKHKSTVRTFLKRLGSVFLEEFLMSEENVLFLTFPKASSTFRRVYRSRIWYLDILSINDLANYKYKL.

Belongs to the intron maturase 2 family. MatK subfamily.

The protein localises to the plastid. The protein resides in the chloroplast. In terms of biological role, usually encoded in the trnK tRNA gene intron. Probably assists in splicing its own and other chloroplast group II introns. In Verbena rigida (Tuberous vervain), this protein is Maturase K.